The following is a 364-amino-acid chain: Fructose-bisphosphate aldolase B (364 aa).

An N-acetylalanine modification is found at A2. An N6-succinyllysine modification is found at K13. A Phosphoserine modification is found at S36. T39 bears the Phosphothreonine mark. R43 is a binding site for beta-D-fructose 1,6-bisphosphate. Residue T119 is modified to Phosphothreonine. K121 bears the N6-succinyllysine mark. S132 is subject to Phosphoserine. Residue E188 is the Proton acceptor of the active site. K230 (schiff-base intermediate with dihydroxyacetone-P) is an active-site residue. 4 positions are modified to phosphoserine: S272, S276, S299, and S301. A beta-D-fructose 1,6-bisphosphate-binding site is contributed by 272–274 (SGG). Position 304 (R304) interacts with beta-D-fructose 1,6-bisphosphate. A Phosphoserine modification is found at S309. K317 carries the post-translational modification N6-succinyllysine.

Belongs to the class I fructose-bisphosphate aldolase family. As to quaternary structure, homotetramer. Interacts with BBS1, BBS2, BBS4 and BBS7. Forms a ternary complex with G6PD and TP53; this interaction is direct.

It is found in the cytoplasm. It localises to the cytosol. Its subcellular location is the cytoskeleton. The protein resides in the microtubule organizing center. The protein localises to the centrosome. It is found in the centriolar satellite. The catalysed reaction is beta-D-fructose 1,6-bisphosphate = D-glyceraldehyde 3-phosphate + dihydroxyacetone phosphate. It catalyses the reaction beta-D-fructose 1-phosphate = D-glyceraldehyde + dihydroxyacetone phosphate. The protein operates within carbohydrate degradation; glycolysis; D-glyceraldehyde 3-phosphate and glycerone phosphate from D-glucose: step 4/4. It functions in the pathway carbohydrate biosynthesis; gluconeogenesis. It participates in carbohydrate metabolism; fructose metabolism. Catalyzes the aldol cleavage of fructose 1,6-biphosphate to form two triosephosphates dihydroxyacetone phosphate and D-glyceraldehyde 3-phosphate in glycolysis as well as the reverse stereospecific aldol addition reaction in gluconeogenesis. In fructolysis, metabolizes fructose 1-phosphate derived from the phosphorylation of dietary fructose by fructokinase into dihydroxyacetone phosphate and D-glyceraldehyde. Acts as an adapter independently of its enzymatic activity, exerts a tumor suppressor role by stabilizing the ternary complex with G6PD and TP53 to inhibit G6PD activity and keep oxidative pentose phosphate metabolism in check. The protein is Fructose-bisphosphate aldolase B (ALDOB) of Ovis aries (Sheep).